Reading from the N-terminus, the 180-residue chain is uncharacterized protein (180 aa).

This is an uncharacterized protein from Methanocaldococcus jannaschii (strain ATCC 43067 / DSM 2661 / JAL-1 / JCM 10045 / NBRC 100440) (Methanococcus jannaschii).